The primary structure comprises 260 residues: Snake venom serine protease salmobin (260 aa).

An N-terminal signal peptide occupies residues 1 to 18 (MVLIKVLANHLILQLSYA). A propeptide spanning residues 19–24 (QKSSEL) is cleaved from the precursor. Residues 25-251 (VIGGDECNIN…YTDWIQSIIA (227 aa)) enclose the Peptidase S1 domain. Intrachain disulfides connect C31/C165, C52/C68, C102/C258, C144/C212, C176/C191, and C202/C227. Residue H67 is the Charge relay system of the active site. N-linked (GlcNAc...) asparagine glycosylation occurs at N105. D112 (charge relay system) is an active-site residue. N-linked (GlcNAc...) asparagine glycosylation is found at N123 and N156. S206 serves as the catalytic Charge relay system.

This sequence belongs to the peptidase S1 family. Snake venom subfamily. Monomer. As to expression, expressed by the venom gland.

The protein localises to the secreted. Snake venom serine protease that may act in the hemostasis system of the prey. This is Snake venom serine protease salmobin from Gloydius halys (Chinese water mocassin).